We begin with the raw amino-acid sequence, 576 residues long: Putative pentatricopeptide repeat-containing protein At5g47460 (576 aa).

PPR repeat units follow at residues 20–53 (SSNS…GEKP), 54–88 (DASP…GFVS), 89–119 (NTRL…MPDP), 120–154 (DVIS…DVFP), 155–189 (NEFS…GLEK), 191–225 (NVVV…DTVS), 226–252 (WNAI…MPNP), 253–287 (DTVT…NSSS), 288–318 (WNTI…GVRF), 319–353 (DEYS…GLDS), 354–384 (RVVV…MPRK), 385–419 (NLIV…RFLK), 421–452 (DRFT…MINE), and 458–488 (SVEH…FGFG). Residues 493-570 (AWRALLGACS…EVGSSWIDSR (78 aa)) form a type E motif region.

The protein belongs to the PPR family. PCMP-E subfamily.

This Arabidopsis thaliana (Mouse-ear cress) protein is Putative pentatricopeptide repeat-containing protein At5g47460 (PCMP-E103).